A 344-amino-acid chain; its full sequence is N-acetyl-gamma-glutamyl-phosphate reductase (344 aa).

Cys-149 is a catalytic residue.

The protein belongs to the NAGSA dehydrogenase family. Type 1 subfamily.

The protein localises to the cytoplasm. The enzyme catalyses N-acetyl-L-glutamate 5-semialdehyde + phosphate + NADP(+) = N-acetyl-L-glutamyl 5-phosphate + NADPH + H(+). Its pathway is amino-acid biosynthesis; L-arginine biosynthesis; N(2)-acetyl-L-ornithine from L-glutamate: step 3/4. Catalyzes the NADPH-dependent reduction of N-acetyl-5-glutamyl phosphate to yield N-acetyl-L-glutamate 5-semialdehyde. This is N-acetyl-gamma-glutamyl-phosphate reductase from Shouchella clausii (strain KSM-K16) (Alkalihalobacillus clausii).